The chain runs to 290 residues: Ventral anterior homeobox 2 (290 aa).

A compositionally biased stretch (basic and acidic residues) spans Met-1–Glu-17. Positions Met-1–His-75 are disordered. Residues Pro-102–Gln-161 constitute a DNA-binding region (homeobox). The tract at residues Pro-205–Pro-240 is disordered. Low complexity predominate over residues Pro-222 to Ser-238.

It belongs to the EMX homeobox family.

The protein resides in the nucleus. Functionally, transcription factor that may function in dorsoventral specification of the forebrain. Regulates the expression of Wnt signaling antagonists including the expression of a truncated TCF7L2 isoform that cannot bind CTNNB1 and acts therefore as a potent dominant-negative Wnt antagonist. Plays a crucial role in eye development and, in particular, in the specification of the ventral optic vesicle. May be a regulator of axial polarization in the retina. In Homo sapiens (Human), this protein is Ventral anterior homeobox 2 (VAX2).